Here is a 200-residue protein sequence, read N- to C-terminus: NADH-quinone oxidoreductase subunit C (200 aa).

The protein belongs to the complex I 30 kDa subunit family. As to quaternary structure, NDH-1 is composed of 14 different subunits. Subunits NuoB, C, D, E, F, and G constitute the peripheral sector of the complex.

Its subcellular location is the cell inner membrane. It catalyses the reaction a quinone + NADH + 5 H(+)(in) = a quinol + NAD(+) + 4 H(+)(out). Its function is as follows. NDH-1 shuttles electrons from NADH, via FMN and iron-sulfur (Fe-S) centers, to quinones in the respiratory chain. The immediate electron acceptor for the enzyme in this species is believed to be ubiquinone. Couples the redox reaction to proton translocation (for every two electrons transferred, four hydrogen ions are translocated across the cytoplasmic membrane), and thus conserves the redox energy in a proton gradient. The polypeptide is NADH-quinone oxidoreductase subunit C (Cereibacter sphaeroides (strain ATCC 17029 / ATH 2.4.9) (Rhodobacter sphaeroides)).